Here is a 127-residue protein sequence, read N- to C-terminus: Large ribosomal subunit protein uL24A (127 aa).

This sequence belongs to the universal ribosomal protein uL24 family. Component of the large ribosomal subunit (LSU). Mature yeast ribosomes consist of a small (40S) and a large (60S) subunit. The 40S small subunit contains 1 molecule of ribosomal RNA (18S rRNA) and 33 different proteins (encoded by 57 genes). The large 60S subunit contains 3 rRNA molecules (25S, 5.8S and 5S rRNA) and 46 different proteins (encoded by 81 genes).

The protein localises to the cytoplasm. Functionally, component of the ribosome, a large ribonucleoprotein complex responsible for the synthesis of proteins in the cell. The small ribosomal subunit (SSU) binds messenger RNAs (mRNAs) and translates the encoded message by selecting cognate aminoacyl-transfer RNA (tRNA) molecules. The large subunit (LSU) contains the ribosomal catalytic site termed the peptidyl transferase center (PTC), which catalyzes the formation of peptide bonds, thereby polymerizing the amino acids delivered by tRNAs into a polypeptide chain. The nascent polypeptides leave the ribosome through a tunnel in the LSU and interact with protein factors that function in enzymatic processing, targeting, and the membrane insertion of nascent chains at the exit of the ribosomal tunnel. The polypeptide is Large ribosomal subunit protein uL24A (Saccharomyces cerevisiae (strain ATCC 204508 / S288c) (Baker's yeast)).